Reading from the N-terminus, the 119-residue chain is Large ribosomal subunit protein bL20c (119 aa).

Belongs to the bacterial ribosomal protein bL20 family.

It is found in the plastid. Its subcellular location is the chloroplast. Binds directly to 23S ribosomal RNA and is necessary for the in vitro assembly process of the 50S ribosomal subunit. It is not involved in the protein synthesizing functions of that subunit. This is Large ribosomal subunit protein bL20c from Brachypodium distachyon (Purple false brome).